The chain runs to 313 residues: Porphobilinogen deaminase (313 aa).

At Cys-242 the chain carries S-(dipyrrolylmethanemethyl)cysteine.

It belongs to the HMBS family. In terms of assembly, monomer. Dipyrromethane serves as cofactor.

The enzyme catalyses 4 porphobilinogen + H2O = hydroxymethylbilane + 4 NH4(+). The protein operates within porphyrin-containing compound metabolism; protoporphyrin-IX biosynthesis; coproporphyrinogen-III from 5-aminolevulinate: step 2/4. In terms of biological role, tetrapolymerization of the monopyrrole PBG into the hydroxymethylbilane pre-uroporphyrinogen in several discrete steps. In Proteus mirabilis, this protein is Porphobilinogen deaminase (hemC).